Consider the following 313-residue polypeptide: MPTPKAFALLGPTAGGKTALALKIAETLPVEIISLDSALVYRDMDIGTAKPSASERAFVPHHLIDIITPVQTYSAARFVEDCTRLIGEITARGKYPLIVGGTMMYFRALTQGLNDLPEADACLRADLDEQKQMYGLDFLYRTLQQVDPETACRLKPNDSQRIGRALEVYYLTGKPMSEHLGRQSPHTLPFDLHTAALIPENRARLHENIALRFHLMLEQGFIGEVENLRRRYPSLTADSPAIRCVGYRQAWEYLDGATDRQTFIEKGIAATRQLAKRQLTWLRKTPLDCVADPFSDGTSCTRLIEAAKRFFGV.

ATP is bound at residue 11 to 18 (GPTAGGKT). 13-18 (TAGGKT) is a binding site for substrate. 3 interaction with substrate tRNA regions span residues 36–39 (DSAL), 160–164 (QRIGR), and 243–248 (RCVGYR).

This sequence belongs to the IPP transferase family. In terms of assembly, monomer. Mg(2+) serves as cofactor.

The enzyme catalyses adenosine(37) in tRNA + dimethylallyl diphosphate = N(6)-dimethylallyladenosine(37) in tRNA + diphosphate. Catalyzes the transfer of a dimethylallyl group onto the adenine at position 37 in tRNAs that read codons beginning with uridine, leading to the formation of N6-(dimethylallyl)adenosine (i(6)A). The chain is tRNA dimethylallyltransferase from Neisseria meningitidis serogroup A / serotype 4A (strain DSM 15465 / Z2491).